Reading from the N-terminus, the 100-residue chain is ATP synthase subunit g 2, mitochondrial (100 aa).

It belongs to the ATPase g subunit family. As to quaternary structure, F-type ATPases have 2 components, CF(1) - the catalytic core - and CF(0) - the membrane proton channel. CF(0) seems to have nine subunits: a, b, c, d, e, f, g, F6 and 8 (or A6L).

It is found in the mitochondrion membrane. Functionally, mitochondrial membrane ATP synthase (F(1)F(0) ATP synthase or Complex V) produces ATP from ADP in the presence of a proton gradient across the membrane which is generated by electron transport complexes of the respiratory chain. F-type ATPases consist of two structural domains, F(1) - containing the extramembraneous catalytic core, and F(0) - containing the membrane proton channel, linked together by a central stalk and a peripheral stalk. During catalysis, ATP synthesis in the catalytic domain of F(1) is coupled via a rotary mechanism of the central stalk subunits to proton translocation. Part of the complex F(0) domain. Minor subunit located with subunit a in the membrane. The sequence is that of ATP synthase subunit g 2, mitochondrial from Homo sapiens (Human).